A 146-amino-acid chain; its full sequence is Hemoglobin subunit beta (146 aa).

The residue at position 1 (Val1) is an N-acetylvaline. A Globin domain is found at 2-146; the sequence is HLTDAEKALV…VATALAHKYH (145 aa). Phosphothreonine is present on Thr12. At Ser44 the chain carries Phosphoserine. The residue at position 59 (Lys59) is an N6-acetyllysine. His63 provides a ligand contact to heme b. Residue Lys82 is modified to N6-acetyllysine. His92 contacts heme b. Cys93 bears the S-nitrosocysteine mark. Lys144 carries the N6-acetyllysine modification.

The protein belongs to the globin family. As to quaternary structure, heterotetramer of two alpha chains and two beta chains. In terms of tissue distribution, red blood cells.

Functionally, involved in oxygen transport from the lung to the various peripheral tissues. The sequence is that of Hemoglobin subunit beta from Peromyscus californicus (California mouse).